The following is a 405-amino-acid chain: Glucose-1-phosphate adenylyltransferase 1 (405 aa).

Alpha-D-glucose 1-phosphate is bound by residues Y96, G161, 176 to 177 (EK), and S194.

Belongs to the bacterial/plant glucose-1-phosphate adenylyltransferase family. In terms of assembly, homotetramer.

The enzyme catalyses alpha-D-glucose 1-phosphate + ATP + H(+) = ADP-alpha-D-glucose + diphosphate. It participates in glycan biosynthesis; glycogen biosynthesis. Involved in the biosynthesis of ADP-glucose, a building block required for the elongation reactions to produce glycogen. Catalyzes the reaction between ATP and alpha-D-glucose 1-phosphate (G1P) to produce pyrophosphate and ADP-Glc. The sequence is that of Glucose-1-phosphate adenylyltransferase 1 from Vibrio parahaemolyticus serotype O3:K6 (strain RIMD 2210633).